The primary structure comprises 648 residues: Acyl-CoA-binding domain-containing protein 5 (648 aa).

The ACB domain occupies 13 to 107; that stretch reads YPERFYAAAS…LEEADPGWYP (95 aa). An acyl-CoA contacts are provided by residues lysine 34, 49 to 53, and lysine 75; that span reads YTLHQ. Kelch repeat units lie at residues 196–244, 256–306, 307–357, 359–408, 409–457, and 464–509; these read KMYM…KLTH, QLLS…LVGK, SLVI…VHAE, YLLI…TIGE, NWYI…LVVS, and IVVA…AVNN. The residue at position 517 (serine 517) is a Phosphoserine. The stretch at 520–632 forms a coiled coil; that stretch reads KVEGKADRII…AATMNAKRQS (113 aa). The span at 625–634 shows a compositional bias: polar residues; sequence TMNAKRQSSG. The disordered stretch occupies residues 625 to 648; that stretch reads TMNAKRQSSGGVWGWLAGTPPPKT.

The protein belongs to the ACBP family. As to expression, expressed in roots, stems, leaves, flowers and siliques.

Its subcellular location is the cytoplasm. Its function is as follows. Binds medium- and long-chain acyl-CoA esters with very high affinity. Can interact in vitro with oleoyl-CoA, barely with palmitoyl-CoA, but not with arachidonyl-CoA. May function as an intracellular carrier of acyl-CoA esters. This chain is Acyl-CoA-binding domain-containing protein 5 (ACBP5), found in Arabidopsis thaliana (Mouse-ear cress).